We begin with the raw amino-acid sequence, 340 residues long: Sodium/bile acid cotransporter 7 (340 aa).

At 1–10 the chain is on the cytoplasmic side; it reads MRLLERARKE. The chain crosses the membrane as a helical span at residues 11 to 31; the sequence is WFMVGIVVAIGAAKLEPSVGV. Topologically, residues 32 to 37 are extracellular; it reads NGGPLK. Residues 38–58 form a helical membrane-spanning segment; sequence PEITVSYIAVATIFFNSGLSL. Over 59–71 the chain is Cytoplasmic; sequence KTEELTSALVHLR. Residues 72–92 form a helical membrane-spanning segment; sequence LHLFIQIFTLAFFPAAIWLFL. Topologically, residues 93–116 are extracellular; that stretch reads QLLSVTSINEWLLKGLQTVGCMPP. A helical membrane pass occupies residues 117 to 137; that stretch reads PVSSAVILTKAVGGNEAAAIF. A topological domain (cytoplasmic) is located at residue Asn138. Residues 139–159 traverse the membrane as a helical segment; the sequence is SAFGSFLGIVVTPVLLLLFLG. The Extracellular portion of the chain corresponds to 160–163; sequence SSSS. Residues 164-184 traverse the membrane as a helical segment; sequence VPFTSIFSQLFMTVVVPLVIG. Topologically, residues 185–201 are cytoplasmic; that stretch reads QIVRRYIKDWLERKKPP. The chain crosses the membrane as a helical span at residues 202 to 222; the sequence is FGVVSSSVLLMIIYTTFCDTF. At 223 to 234 the chain is on the extracellular side; that stretch reads SNPNIDLDKFSL. Residues 235-255 form a helical membrane-spanning segment; sequence ILILFIIVSVQLSFMLLTFIF. The Cytoplasmic portion of the chain corresponds to 256–270; that stretch reads STRNNSGFTPADTVA. The chain crosses the membrane as a helical span at residues 271 to 291; sequence IIFCSTHKSLTLGIPMLKIVF. At 292-298 the chain is on the extracellular side; that stretch reads AGHEHLS. Residues 299–319 form a helical membrane-spanning segment; it reads LISVPLLIYHPAQILLGSVLV. The Cytoplasmic portion of the chain corresponds to 320-340; sequence PTIKSWMVSRQKGVKLTRPTV.

This sequence belongs to the bile acid:sodium symporter (BASS) (TC 2.A.28) family. Expressed in heart, brain, colon, lung, liver, adrenal gland, stomach and ovary. Also expressed weakly in small intestine. Expressed in skeletal tissues.

It is found in the cell membrane. Its subcellular location is the endoplasmic reticulum membrane. The protein resides in the golgi apparatus membrane. In terms of biological role, involved in teeth and skeletal development. Has an essential role in the biosynthesis and trafficking of glycosaminoglycans and glycoproteins to produce a proper functioning extracellular matrix. Required for extracellular matrix mineralization. Also involved in the regulation of cellular calcium homeostasis. Does not show transport activity towards bile acids or steroid sulfates (including taurocholate, cholate, chenodeoxycholate, estrone-3-sulfate, dehydroepiandrosterone sulfate (DHEAS) and pregnenolone sulfate). In Mus musculus (Mouse), this protein is Sodium/bile acid cotransporter 7 (Slc10a7).